Here is a 481-residue protein sequence, read N- to C-terminus: Membrane-bound lytic murein transglycosylase F (481 aa).

The first 21 residues, 1–21 (MKPLKLNYFFIGIITLLLALA), serve as a signal peptide directing secretion. The tract at residues 22-268 (LWPSIPWRSS…RLEEKYLGHV (247 aa)) is non-LT domain. The LT domain stretch occupies residues 269–481 (GEFDYVDTTT…PAVPLTKVPE (213 aa)). The active site involves glutamate 313.

It in the N-terminal section; belongs to the bacterial solute-binding protein 3 family. In the C-terminal section; belongs to the transglycosylase Slt family.

The protein localises to the cell outer membrane. It carries out the reaction Exolytic cleavage of the (1-&gt;4)-beta-glycosidic linkage between N-acetylmuramic acid (MurNAc) and N-acetylglucosamine (GlcNAc) residues in peptidoglycan, from either the reducing or the non-reducing ends of the peptidoglycan chains, with concomitant formation of a 1,6-anhydrobond in the MurNAc residue.. Its function is as follows. Murein-degrading enzyme that degrades murein glycan strands and insoluble, high-molecular weight murein sacculi, with the concomitant formation of a 1,6-anhydromuramoyl product. Lytic transglycosylases (LTs) play an integral role in the metabolism of the peptidoglycan (PG) sacculus. Their lytic action creates space within the PG sacculus to allow for its expansion as well as for the insertion of various structures such as secretion systems and flagella. The protein is Membrane-bound lytic murein transglycosylase F of Pectobacterium atrosepticum (strain SCRI 1043 / ATCC BAA-672) (Erwinia carotovora subsp. atroseptica).